The primary structure comprises 85 residues: Defensin-like protein 76 (85 aa).

The N-terminal stretch at 1–27 (MQNQKHSHILTAITIVLLFAMAAKINA) is a signal peptide. Cystine bridges form between Cys35–Cys70, Cys40–Cys59, Cys44–Cys68, and Cys48–Cys69.

This sequence belongs to the DEFL family.

The protein localises to the secreted. In Arabidopsis thaliana (Mouse-ear cress), this protein is Defensin-like protein 76 (LCR86).